Reading from the N-terminus, the 365-residue chain is Endophilin-B1 (365 aa).

An N-acetylmethionine modification is found at Met1. The tract at residues 1–30 (MNIMDFNVKKLAADAGTFLSRAVQFTEEKL) is membrane-binding amphipathic helix. Positions 1 to 37 (MNIMDFNVKKLAADAGTFLSRAVQFTEEKLGQAEKTE) are required for membrane binding. One can recognise a BAR domain in the interval 27–261 (EEKLGQAEKT…LGSFPSNYLS (235 aa)). Thr145 carries the post-translational modification Phosphothreonine; by CDK5. The stretch at 155 to 195 (YKTIAKERKLLQNKRLDLDAAKTRLKKAKAAETRNSSEQEL) forms a coiled coil. In terms of domain architecture, SH3 spans 305–365 (SGSRKARVLY…VPITYLELLN (61 aa)).

This sequence belongs to the endophilin family. As to quaternary structure, homodimer, and heterodimer with SH3GLB2. Binds BAX; induction of apoptosis augments BAX binding. Binds DNM1, HTT, AMPH, BIN1 and ARFGAP1. Interacts with UVRAG; UVRAG bridges the interaction to BECN1 indicative for an association with the PI3K complex II (PI3KC3-C2). In terms of processing, phosphorylated at Thr-145 by CDK5; this phosphorylation is required for autophagy induction in starved neurons and facilitates homodimerization. In terms of tissue distribution, highly expressed in heart, skeletal muscle, kidney and placenta. Detected at lower levels in brain, colon, thymus, spleen, liver, small intestine, lung and peripheral blood leukocytes.

It is found in the cytoplasm. The protein localises to the golgi apparatus membrane. Its subcellular location is the mitochondrion outer membrane. The protein resides in the cytoplasmic vesicle. It localises to the autophagosome membrane. It is found in the midbody. Functionally, may be required for normal outer mitochondrial membrane dynamics. Required for coatomer-mediated retrograde transport in certain cells. May recruit other proteins to membranes with high curvature. May promote membrane fusion. Involved in activation of caspase-dependent apoptosis by promoting BAX/BAK1 activation. Isoform 1 acts proapoptotic in fibroblasts. Involved in caspase-independent apoptosis during nutrition starvation and involved in the regulation of autophagy. Activates lipid kinase activity of PIK3C3 during autophagy probably by associating with the PI3K complex II (PI3KC3-C2). Associated with PI3KC3-C2 during autophagy may regulate the trafficking of ATG9A from the Golgi complex to the peripheral cytoplasm for the formation of autophagosomes by inducing Golgi membrane tubulation and fragmentation. Involved in regulation of degradative endocytic trafficking and cytokinesis, probably in the context of PI3KC3-C2. Isoform 2 acts antiapoptotic in neuronal cells; involved in maintenance of mitochondrial morphology and promotes neuronal viability. The sequence is that of Endophilin-B1 (SH3GLB1) from Homo sapiens (Human).